The sequence spans 132 residues: Large ribosomal subunit protein bL17 (132 aa).

Belongs to the bacterial ribosomal protein bL17 family. In terms of assembly, part of the 50S ribosomal subunit. Contacts protein L32.

This is Large ribosomal subunit protein bL17 from Anaplasma phagocytophilum (strain HZ).